Consider the following 62-residue polypeptide: Large ribosomal subunit protein bL32 (62 aa).

Basic residues predominate over residues 1–16; that stretch reads MAVPKRKTSPMKRGFR. The segment at 1–62 is disordered; it reads MAVPKRKTSP…QILTPKNKEA (62 aa). Basic and acidic residues predominate over residues 28–44; the sequence is VEDKDSGELRRPHHVDL.

The protein belongs to the bacterial ribosomal protein bL32 family.

The protein is Large ribosomal subunit protein bL32 of Methylocella silvestris (strain DSM 15510 / CIP 108128 / LMG 27833 / NCIMB 13906 / BL2).